Here is a 333-residue protein sequence, read N- to C-terminus: MSPTGTPATPALRHRTVLLDEAVDALVWRPDGVYVDGTFGRGGHSRAVLARLGPDGALVAFDKDPAAIAEAGTIKDARFSIEHASFAAMAERLSGRGHVAGVLLDLGISSPQIDEAARGFSFRFEGPLDMRMDTTRGITAAQWLAQADEQDIARVIRDYGEERFAVQIAKAIVARRSEPGDGGPIATTADLAALVAKAVKTREKGQDPATRTFQALRIHVNQELEDLERGLKAAYELLQVGGRLVVISFHSLEDRIVKRFMAAHARPQQDADPALRRAPLRAADLPQPTLRLLGRYKPGPEEVAANPRARSAVMRVAEKLAPAATTAGGGARA.

S-adenosyl-L-methionine is bound by residues 42 to 44 (GGH), Asp-62, Phe-86, Asp-105, and Gln-112.

Belongs to the methyltransferase superfamily. RsmH family.

It localises to the cytoplasm. The enzyme catalyses cytidine(1402) in 16S rRNA + S-adenosyl-L-methionine = N(4)-methylcytidine(1402) in 16S rRNA + S-adenosyl-L-homocysteine + H(+). Specifically methylates the N4 position of cytidine in position 1402 (C1402) of 16S rRNA. The sequence is that of Ribosomal RNA small subunit methyltransferase H from Cupriavidus necator (strain ATCC 17699 / DSM 428 / KCTC 22496 / NCIMB 10442 / H16 / Stanier 337) (Ralstonia eutropha).